We begin with the raw amino-acid sequence, 108 residues long: MEYVYAALLLHSVGKEINEENLKAVLQAAGVEPEEARIKALVAALEGVNIDEVIEKAAMPVAVAAAPAAAPAEAGGEEKKEEEKKEEEEKEEEVSEEEALAGLSALFG.

A disordered region spans residues P67–G108. The span at K84 to A99 shows a compositional bias: acidic residues.

It belongs to the eukaryotic ribosomal protein P1/P2 family. Part of the 50S ribosomal subunit. Homodimer, it forms part of the ribosomal stalk which helps the ribosome interact with GTP-bound translation factors. Forms a heptameric uL10/P0(P1)2(P1)2(P1)2 complex, where uL10/P0 forms an elongated spine to which the P1 dimers bind in a sequential fashion.

Forms part of the ribosomal stalk, playing a central role in the interaction of the ribosome with GTP-bound translation factors. The stalk complex of P.horikoshii binds to E.coli large subunits and confers on them the ability to interact with eukaryotic elongation factors. Each succesive P1 dimer bound along the P0 spine increases the GTPase activity of elongation factors and increases translation by reconsituted ribosomes. In Pyrococcus horikoshii (strain ATCC 700860 / DSM 12428 / JCM 9974 / NBRC 100139 / OT-3), this protein is Large ribosomal subunit protein P1.